A 127-amino-acid polypeptide reads, in one-letter code: Small ribosomal subunit protein uS12 (127 aa).

Position 89 is a 3-methylthioaspartic acid (Asp-89). Residues 101-127 (ALDTSGVAGRTQRRSKYGAKRPKEAKK) form a disordered region. Positions 111–127 (TQRRSKYGAKRPKEAKK) are enriched in basic residues.

It belongs to the universal ribosomal protein uS12 family. Part of the 30S ribosomal subunit. Contacts proteins S8 and S17. May interact with IF1 in the 30S initiation complex.

With S4 and S5 plays an important role in translational accuracy. In terms of biological role, interacts with and stabilizes bases of the 16S rRNA that are involved in tRNA selection in the A site and with the mRNA backbone. Located at the interface of the 30S and 50S subunits, it traverses the body of the 30S subunit contacting proteins on the other side and probably holding the rRNA structure together. The combined cluster of proteins S8, S12 and S17 appears to hold together the shoulder and platform of the 30S subunit. The polypeptide is Small ribosomal subunit protein uS12 (Flavobacterium johnsoniae (strain ATCC 17061 / DSM 2064 / JCM 8514 / BCRC 14874 / CCUG 350202 / NBRC 14942 / NCIMB 11054 / UW101) (Cytophaga johnsonae)).